Here is a 199-residue protein sequence, read N- to C-terminus: Holliday junction branch migration complex subunit RuvA (199 aa).

The segment at Met-1 to Gly-65 is domain I. A domain II region spans residues Ser-66–Thr-144. A flexible linker region spans residues Thr-145–Asp-155. A domain III region spans residues Asp-155–Arg-199.

This sequence belongs to the RuvA family. As to quaternary structure, homotetramer. Forms an RuvA(8)-RuvB(12)-Holliday junction (HJ) complex. HJ DNA is sandwiched between 2 RuvA tetramers; dsDNA enters through RuvA and exits via RuvB. An RuvB hexamer assembles on each DNA strand where it exits the tetramer. Each RuvB hexamer is contacted by two RuvA subunits (via domain III) on 2 adjacent RuvB subunits; this complex drives branch migration. In the full resolvosome a probable DNA-RuvA(4)-RuvB(12)-RuvC(2) complex forms which resolves the HJ.

The protein localises to the cytoplasm. Functionally, the RuvA-RuvB-RuvC complex processes Holliday junction (HJ) DNA during genetic recombination and DNA repair, while the RuvA-RuvB complex plays an important role in the rescue of blocked DNA replication forks via replication fork reversal (RFR). RuvA specifically binds to HJ cruciform DNA, conferring on it an open structure. The RuvB hexamer acts as an ATP-dependent pump, pulling dsDNA into and through the RuvAB complex. HJ branch migration allows RuvC to scan DNA until it finds its consensus sequence, where it cleaves and resolves the cruciform DNA. The protein is Holliday junction branch migration complex subunit RuvA of Leptospira biflexa serovar Patoc (strain Patoc 1 / Ames).